Here is a 151-residue protein sequence, read N- to C-terminus: FAD synthase (151 aa).

Residues Thr21 to Phe22, His26 to His29, and Asp104 contribute to the ATP site.

This sequence belongs to the archaeal FAD synthase family. Homodimer. It depends on a divalent metal cation as a cofactor.

The catalysed reaction is FMN + ATP + H(+) = FAD + diphosphate. The protein operates within cofactor biosynthesis; FAD biosynthesis; FAD from FMN: step 1/1. In terms of biological role, catalyzes the transfer of the AMP portion of ATP to flavin mononucleotide (FMN) to produce flavin adenine dinucleotide (FAD) coenzyme. In Methanosarcina acetivorans (strain ATCC 35395 / DSM 2834 / JCM 12185 / C2A), this protein is FAD synthase.